A 505-amino-acid chain; its full sequence is Glutamate--cysteine ligase (505 aa).

It belongs to the glutamate--cysteine ligase type 1 family. Type 1 subfamily.

It carries out the reaction L-cysteine + L-glutamate + ATP = gamma-L-glutamyl-L-cysteine + ADP + phosphate + H(+). Its pathway is sulfur metabolism; glutathione biosynthesis; glutathione from L-cysteine and L-glutamate: step 1/2. In Wigglesworthia glossinidia brevipalpis, this protein is Glutamate--cysteine ligase.